Here is a 154-residue protein sequence, read N- to C-terminus: Small ribosomal subunit protein uS7 (154 aa).

This sequence belongs to the universal ribosomal protein uS7 family.

The chain is Small ribosomal subunit protein uS7 (RPS5) from Nicotiana plumbaginifolia (Leadwort-leaved tobacco).